The primary structure comprises 197 residues: Fucoxanthin-chlorophyll a-c binding protein C, chloroplastic (197 aa).

Residues M1–M31 constitute a chloroplast transit peptide. A run of 3 helical transmembrane segments spans residues I73–I94, I113–M133, and G174–P196.

This sequence belongs to the fucoxanthin chlorophyll protein family. In terms of assembly, the LHC complex of chromophytic algae is composed of fucoxanthin, chlorophyll A and C bound non-covalently by fucoxanthin chlorophyll proteins (FCPs). The ratio of the pigments in LHC; fucoxanthin: chlorophyll C: chlorophyll A; (0.6-1): (0.1-0.3): (1).

The protein resides in the plastid. Its subcellular location is the chloroplast thylakoid membrane. The light-harvesting complex (LHC) functions as a light receptor, it captures and delivers excitation energy to photosystems with which it is closely associated. Energy is transferred from the carotenoid and chlorophyll C (or B) to chlorophyll A and the photosynthetic reaction centers where it is used to synthesize ATP and reducing power. This chain is Fucoxanthin-chlorophyll a-c binding protein C, chloroplastic (FCPC), found in Phaeodactylum tricornutum (Diatom).